The chain runs to 177 residues: MAKTTRSTGTKTQDEIKADGLKEKMISVNRVTKVVKGGRILGFAALTVVGDGKGGIGMGKGKSREVPLAVQKAMDEARRGMIKINLINGTLHHPIIGRHGAARVYMQPASEGTGIIAGGPMRAIFEVMGVHNILAKCLGSTNPYNIVRATLNGLDKIQTPAMIAAKRGKSIDEITGA.

In terms of domain architecture, S5 DRBM spans leucine 21–isoleucine 84.

It belongs to the universal ribosomal protein uS5 family. As to quaternary structure, part of the 30S ribosomal subunit. Contacts proteins S4 and S8.

Functionally, with S4 and S12 plays an important role in translational accuracy. Located at the back of the 30S subunit body where it stabilizes the conformation of the head with respect to the body. In Nitrosomonas eutropha (strain DSM 101675 / C91 / Nm57), this protein is Small ribosomal subunit protein uS5.